A 321-amino-acid polypeptide reads, in one-letter code: Probable pectate lyase A (321 aa).

The first 20 residues, 1–20 (MANFKLFLALAACLSGQALA), serve as a signal peptide directing secretion. Residue asparagine 93 is glycosylated (N-linked (GlcNAc...) asparagine). Residues aspartate 134, aspartate 163, and aspartate 167 each contribute to the Ca(2+) site. Arginine 220 is an active-site residue.

Belongs to the polysaccharide lyase 1 family. Ca(2+) is required as a cofactor.

Its subcellular location is the secreted. It catalyses the reaction Eliminative cleavage of (1-&gt;4)-alpha-D-galacturonan to give oligosaccharides with 4-deoxy-alpha-D-galact-4-enuronosyl groups at their non-reducing ends.. Functionally, pectinolytic enzyme consist of four classes of enzymes: pectin lyase, polygalacturonase, pectin methylesterase and rhamnogalacturonase. Among pectinolytic enzymes, pectin lyase is the most important in depolymerization of pectin, since it cleaves internal glycosidic bonds of highly methylated pectins. Favors pectate, the anion, over pectin, the methyl ester. This is Probable pectate lyase A (plyA) from Aspergillus flavus (strain ATCC 200026 / FGSC A1120 / IAM 13836 / NRRL 3357 / JCM 12722 / SRRC 167).